Consider the following 566-residue polypeptide: Proline--tRNA ligase 1 (566 aa).

It belongs to the class-II aminoacyl-tRNA synthetase family. ProS type 1 subfamily. As to quaternary structure, homodimer.

Its subcellular location is the cytoplasm. It carries out the reaction tRNA(Pro) + L-proline + ATP = L-prolyl-tRNA(Pro) + AMP + diphosphate. In terms of biological role, catalyzes the attachment of proline to tRNA(Pro) in a two-step reaction: proline is first activated by ATP to form Pro-AMP and then transferred to the acceptor end of tRNA(Pro). As ProRS can inadvertently accommodate and process non-cognate amino acids such as alanine and cysteine, to avoid such errors it has two additional distinct editing activities against alanine. One activity is designated as 'pretransfer' editing and involves the tRNA(Pro)-independent hydrolysis of activated Ala-AMP. The other activity is designated 'posttransfer' editing and involves deacylation of mischarged Ala-tRNA(Pro). The misacylated Cys-tRNA(Pro) is not edited by ProRS. The polypeptide is Proline--tRNA ligase 1 (Bacillus cereus (strain ZK / E33L)).